Here is a 215-residue protein sequence, read N- to C-terminus: Small ribosomal subunit protein uS2 (215 aa).

It belongs to the universal ribosomal protein uS2 family.

The protein is Small ribosomal subunit protein uS2 of Caldivirga maquilingensis (strain ATCC 700844 / DSM 13496 / JCM 10307 / IC-167).